A 142-amino-acid chain; its full sequence is ATP synthase F(0) complex subunit C3, mitochondrial (142 aa).

A mitochondrion-targeting transit peptide spans 1 to 67; it reads MFACAKLACT…REFQTSAISR (67 aa). Residues 83-103 traverse the membrane as a helical segment; it reads VGVAGSGAGIGTVFGSLIIGY. K110 carries the N6,N6,N6-trimethyllysine modification. The chain crosses the membrane as a helical span at residues 118–138; the sequence is ILGFALSEAMGLFCLMVAFLI.

The protein belongs to the ATPase C chain family. In terms of assembly, F-type ATPases have 2 components, CF(1) - the catalytic core - and CF(0) - the membrane proton channel. CF(1) has five subunits: alpha(3), beta(3), gamma(1), delta(1), epsilon(1). CF(0) has three main subunits: a, b and c. Interacts with TMEM70 and TMEM242. In terms of processing, trimethylated by ATPSCKMT at Lys-110. Methylation is required for proper incorporation of the C subunit into the ATP synthase complex and mitochondrial respiration.

It localises to the mitochondrion membrane. Its function is as follows. Mitochondrial membrane ATP synthase (F(1)F(0) ATP synthase or Complex V) produces ATP from ADP in the presence of a proton gradient across the membrane which is generated by electron transport complexes of the respiratory chain. F-type ATPases consist of two structural domains, F(1) - containing the extramembraneous catalytic core and F(0) - containing the membrane proton channel, linked together by a central stalk and a peripheral stalk. During catalysis, ATP synthesis in the catalytic domain of F(1) is coupled via a rotary mechanism of the central stalk subunits to proton translocation. Part of the complex F(0) domain. A homomeric c-ring of probably 10 subunits is part of the complex rotary element. This Pongo abelii (Sumatran orangutan) protein is ATP synthase F(0) complex subunit C3, mitochondrial.